Reading from the N-terminus, the 128-residue chain is Glycine cleavage system H protein (128 aa).

Positions 22 to 104 (VATVGITEHA…YGEGWIFKMK (83 aa)) constitute a Lipoyl-binding domain. Lysine 63 bears the N6-lipoyllysine mark.

It belongs to the GcvH family. The glycine cleavage system is composed of four proteins: P, T, L and H. (R)-lipoate serves as cofactor.

In terms of biological role, the glycine cleavage system catalyzes the degradation of glycine. The H protein shuttles the methylamine group of glycine from the P protein to the T protein. In Methylacidiphilum infernorum (isolate V4) (Methylokorus infernorum (strain V4)), this protein is Glycine cleavage system H protein.